A 429-amino-acid polypeptide reads, in one-letter code: Adenylosuccinate synthetase (429 aa).

Residues 12-18 and 40-42 contribute to the GTP site; these read GDEGKGK and GHT. D13 functions as the Proton acceptor in the catalytic mechanism. Positions 13 and 40 each coordinate Mg(2+). IMP is bound by residues 13-16, 38-41, T129, R143, Q223, T238, and R302; these read DEGK and NAGH. H41 (proton donor) is an active-site residue. 298-304 contributes to the substrate binding site; sequence VVTGRKR. Residues R304, 330-332, and 412-414 each bind GTP; these read KLD and STS.

This sequence belongs to the adenylosuccinate synthetase family. Homodimer. Mg(2+) is required as a cofactor.

The protein localises to the cytoplasm. It catalyses the reaction IMP + L-aspartate + GTP = N(6)-(1,2-dicarboxyethyl)-AMP + GDP + phosphate + 2 H(+). Its pathway is purine metabolism; AMP biosynthesis via de novo pathway; AMP from IMP: step 1/2. Plays an important role in the de novo pathway of purine nucleotide biosynthesis. Catalyzes the first committed step in the biosynthesis of AMP from IMP. The protein is Adenylosuccinate synthetase of Brucella abortus (strain 2308).